The chain runs to 211 residues: Urease accessory protein UreF (211 aa).

The protein belongs to the UreF family. As to quaternary structure, ureD, UreF and UreG form a complex that acts as a GTP-hydrolysis-dependent molecular chaperone, activating the urease apoprotein by helping to assemble the nickel containing metallocenter of UreC. The UreE protein probably delivers the nickel.

The protein resides in the cytoplasm. In terms of biological role, required for maturation of urease via the functional incorporation of the urease nickel metallocenter. This is Urease accessory protein UreF from Mycobacterium sp. (strain JLS).